The chain runs to 223 residues: ATP synthase subunit a 2 (223 aa).

Transmembrane regions (helical) follow at residues 17–37 (VAIT…ALVC), 77–97 (FLPL…SGVL), 106–126 (KIET…YFGV), 173–193 (FIIG…LMAL), and 195–215 (ILVG…FIGA).

This sequence belongs to the ATPase A chain family. In terms of assembly, F-type ATPases have 2 components, CF(1) - the catalytic core - and CF(0) - the membrane proton channel. CF(1) has five subunits: alpha(3), beta(3), gamma(1), delta(1), epsilon(1). CF(0) has four main subunits: a, b, b' and c.

The protein resides in the cell inner membrane. In terms of biological role, key component of the proton channel; it plays a direct role in the translocation of protons across the membrane. This chain is ATP synthase subunit a 2, found in Bradyrhizobium sp. (strain BTAi1 / ATCC BAA-1182).